Reading from the N-terminus, the 395-residue chain is Nickel and cobalt resistance protein CnrB (395 aa).

The chain crosses the membrane as a helical span at residues 13–33 (MIAGVAAVAAAVGFGAAHLPV). Residues 35–55 (EKSPASTQAPEAQKPQSAPVK) form a disordered region. Positions 37–50 (SPASTQAPEAQKPQ) are enriched in polar residues. A coiled-coil region spans residues 140–193 (AAERKVAQAKADLARKTYEREASLFQQGVTPRQEMEAAKAALDVAQAEALRAAT).

This sequence belongs to the membrane fusion protein (MFP) (TC 8.A.1) family.

Its subcellular location is the cell inner membrane. In terms of biological role, the products of the genes cnrA, cnrB, and cnrC are likely to form a membrane-bound protein complex catalyzing an energy-dependent efflux of Ni(2+) and Co(2+). The mechanism of action of the CnrCBA complex may be that of a proton/cation antiporter. This Cupriavidus metallidurans (strain ATCC 43123 / DSM 2839 / NBRC 102507 / CH34) (Ralstonia metallidurans) protein is Nickel and cobalt resistance protein CnrB (cnrB).